The sequence spans 443 residues: Glutamate--tRNA ligase 2 (443 aa).

A 'HIGH' region motif is present at residues 7 to 17 (PSPTGLIHVGN). Residues 240-244 (KLSKR) carry the 'KMSKS' region motif. Lys-243 is a binding site for ATP.

It belongs to the class-I aminoacyl-tRNA synthetase family. Glutamate--tRNA ligase type 1 subfamily. In terms of assembly, monomer.

It localises to the cytoplasm. The catalysed reaction is tRNA(Glu) + L-glutamate + ATP = L-glutamyl-tRNA(Glu) + AMP + diphosphate. Catalyzes the attachment of glutamate to tRNA(Glu) in a two-step reaction: glutamate is first activated by ATP to form Glu-AMP and then transferred to the acceptor end of tRNA(Glu). In Gluconacetobacter diazotrophicus (strain ATCC 49037 / DSM 5601 / CCUG 37298 / CIP 103539 / LMG 7603 / PAl5), this protein is Glutamate--tRNA ligase 2.